The primary structure comprises 37 residues: Photosystem I reaction center subunit IX (37 aa).

A helical membrane pass occupies residues 4–24 (FLTTAPVVAAIWFTLTAGILI).

Belongs to the PsaJ family.

Its subcellular location is the cellular thylakoid membrane. May help in the organization of the PsaE and PsaF subunits. The chain is Photosystem I reaction center subunit IX from Synechococcus sp. (strain WH7803).